The following is a 371-amino-acid chain: Ubiquitin receptor RAD23b (371 aa).

The Ubiquitin-like domain maps to 1–79 (MKLTVKTLKG…LVVMLSKSKS (79 aa)). A compositionally biased stretch (low complexity) spans 79 to 117 (SGGSAGQASVQTSSVSQPVSATTSSTKPAAPSTTQSSPV). A disordered region spans residues 79 to 142 (SGGSAGQASV…DTYGQAASTL (64 aa)). Over residues 128 to 142 (PAAQTDTYGQAASTL) the composition is skewed to polar residues. In terms of domain architecture, UBA 1 spans 146 to 189 (SSLEQMVQQIMEMGGGSWDKETVTRALRAAYNNPERAVDYLYSG). The region spanning 242–285 (GTLEFLRNNDQFQQLRTMVHSNPQILQPMLQELGKQNPQLLRLI) is the STI1 domain. Positions 325 to 365 (PAEQEAIQRLEAMGFDRALVIEAFLACDRNEELAANYLLEN) constitute a UBA 2 domain.

The protein belongs to the RAD23 family. As to quaternary structure, interacts with 'Lys-48'-linked polyubiquitin chains. Interacts with RPN10 via its ubiquitin-like domain. Interacts with UBQ1, UBQ2, UBQ5, UBQ7, UBQ10, UBQ11 and IAA16. Binds to RAD4. As to expression, widely expressed in the whole plant.

It localises to the nucleus. Its subcellular location is the cytoplasm. Its function is as follows. May be involved in nucleotide excision repair. Binds and presumably selects ubiquitin-conjugates for destruction. Prefers multiubiquitin chains rather than single ubiquitins, with a binding affinity for 'Lys-48'-linked ubiquitin chains. Acts as a ubiquitin receptor that associates with the 26S proteasomal docking subunit RPN10 for the indirect recognition of ubiquitinated substrates of ubiquitin/26S proteasome-mediated proteolysis (UPP). Involved in UV tolerance in both roots and hypocotyls, specifically in dark conditions. In Arabidopsis thaliana (Mouse-ear cress), this protein is Ubiquitin receptor RAD23b.